The sequence spans 455 residues: Ribosomal protein uS12 methylthiotransferase RimO (455 aa).

The MTTase N-terminal domain maps to 1–114; the sequence is MKYHIVTLGC…INALVGQLER (114 aa). [4Fe-4S] cluster contacts are provided by cysteine 10, cysteine 46, cysteine 78, cysteine 166, cysteine 170, and cysteine 173. In terms of domain architecture, Radical SAM core spans 152–383; it reads THQTPSAYLK…MRLQQTISYT (232 aa). In terms of domain architecture, TRAM spans 386–455; it reads QRWVGRTIKV…AYDLWGEALS (70 aa).

Belongs to the methylthiotransferase family. RimO subfamily. It depends on [4Fe-4S] cluster as a cofactor.

Its subcellular location is the cytoplasm. The enzyme catalyses L-aspartate(89)-[ribosomal protein uS12]-hydrogen + (sulfur carrier)-SH + AH2 + 2 S-adenosyl-L-methionine = 3-methylsulfanyl-L-aspartate(89)-[ribosomal protein uS12]-hydrogen + (sulfur carrier)-H + 5'-deoxyadenosine + L-methionine + A + S-adenosyl-L-homocysteine + 2 H(+). Functionally, catalyzes the methylthiolation of an aspartic acid residue of ribosomal protein uS12. This Chloroflexus aurantiacus (strain ATCC 29366 / DSM 635 / J-10-fl) protein is Ribosomal protein uS12 methylthiotransferase RimO.